Reading from the N-terminus, the 376-residue chain is Lipid-A-disaccharide synthase (376 aa).

This sequence belongs to the LpxB family.

It carries out the reaction a lipid X + a UDP-2-N,3-O-bis[(3R)-3-hydroxyacyl]-alpha-D-glucosamine = a lipid A disaccharide + UDP + H(+). The protein operates within bacterial outer membrane biogenesis; LPS lipid A biosynthesis. Its function is as follows. Condensation of UDP-2,3-diacylglucosamine and 2,3-diacylglucosamine-1-phosphate to form lipid A disaccharide, a precursor of lipid A, a phosphorylated glycolipid that anchors the lipopolysaccharide to the outer membrane of the cell. This chain is Lipid-A-disaccharide synthase, found in Coxiella burnetii (strain RSA 331 / Henzerling II).